Here is a 580-residue protein sequence, read N- to C-terminus: DNA mismatch repair protein MutL (580 aa).

It belongs to the DNA mismatch repair MutL/HexB family.

In terms of biological role, this protein is involved in the repair of mismatches in DNA. It is required for dam-dependent methyl-directed DNA mismatch repair. May act as a 'molecular matchmaker', a protein that promotes the formation of a stable complex between two or more DNA-binding proteins in an ATP-dependent manner without itself being part of a final effector complex. In Chlamydia felis (strain Fe/C-56) (Chlamydophila felis), this protein is DNA mismatch repair protein MutL.